The sequence spans 335 residues: 3-isopropylmalate dehydrogenase (335 aa).

Positions 87, 97, 121, and 211 each coordinate substrate. Positions 211, 235, and 239 each coordinate Mg(2+). 271–283 provides a ligand contact to NAD(+); it reads GSAPDIAGQSKAD.

It belongs to the isocitrate and isopropylmalate dehydrogenases family. LeuB type 2 subfamily. Homodimer. Mg(2+) serves as cofactor. Requires Mn(2+) as cofactor.

Its subcellular location is the cytoplasm. It catalyses the reaction (2R,3S)-3-isopropylmalate + NAD(+) = 4-methyl-2-oxopentanoate + CO2 + NADH. The protein operates within amino-acid biosynthesis; L-leucine biosynthesis; L-leucine from 3-methyl-2-oxobutanoate: step 3/4. In terms of biological role, catalyzes the oxidation of 3-carboxy-2-hydroxy-4-methylpentanoate (3-isopropylmalate) to 3-carboxy-4-methyl-2-oxopentanoate. The product decarboxylates to 4-methyl-2 oxopentanoate. The chain is 3-isopropylmalate dehydrogenase from Nocardia farcinica (strain IFM 10152).